A 376-amino-acid chain; its full sequence is Putative glutamate--cysteine ligase 2-1 (376 aa).

This sequence belongs to the glutamate--cysteine ligase type 2 family. YbdK subfamily.

The enzyme catalyses L-cysteine + L-glutamate + ATP = gamma-L-glutamyl-L-cysteine + ADP + phosphate + H(+). Its function is as follows. ATP-dependent carboxylate-amine ligase which exhibits weak glutamate--cysteine ligase activity. This is Putative glutamate--cysteine ligase 2-1 from Mycobacterium sp. (strain JLS).